Consider the following 60-residue polypeptide: MSEIDAQKVAQRIDTVLDILVAGDYHSAIRNLEILKSELLDHTNAGNTADSAQPKAPWEV.

The protein belongs to the UPF0509 family.

The polypeptide is UPF0509 protein Ent638_2183 (Enterobacter sp. (strain 638)).